A 255-amino-acid polypeptide reads, in one-letter code: Ras-like protein family member 12 (255 aa).

GTP is bound by residues 30-37 (GAMGSGKS), 77-81 (DTADQ), and 137-140 (NKVD).

The protein belongs to the small GTPase superfamily. Ras family.

It catalyses the reaction GTP + H2O = GDP + phosphate + H(+). This chain is Ras-like protein family member 12 (RASL12), found in Danio rerio (Zebrafish).